Consider the following 1377-residue polypeptide: DNA-directed RNA polymerase subunit beta' (1377 aa).

Zn(2+) is bound by residues cysteine 60, cysteine 62, cysteine 75, and cysteine 78. Mg(2+) is bound by residues aspartate 449, aspartate 451, and aspartate 453. Zn(2+) contacts are provided by cysteine 777, cysteine 851, cysteine 858, and cysteine 861.

The protein belongs to the RNA polymerase beta' chain family. As to quaternary structure, the RNAP catalytic core consists of 2 alpha, 1 beta, 1 beta' and 1 omega subunit. When a sigma factor is associated with the core the holoenzyme is formed, which can initiate transcription. Requires Mg(2+) as cofactor. The cofactor is Zn(2+).

The enzyme catalyses RNA(n) + a ribonucleoside 5'-triphosphate = RNA(n+1) + diphosphate. Functionally, DNA-dependent RNA polymerase catalyzes the transcription of DNA into RNA using the four ribonucleoside triphosphates as substrates. The chain is DNA-directed RNA polymerase subunit beta' from Borrelia recurrentis (strain A1).